A 774-amino-acid polypeptide reads, in one-letter code: Neprilysin-2 (774 aa).

The Cytoplasmic portion of the chain corresponds to 1-20 (MQTVIQNPNWWRRRNKLEKS). Residues 21–41 (LLVSLGIMFVVLATGFGLWIG) traverse the membrane as a helical; Signal-anchor for type II membrane protein segment. Topologically, residues 42–774 (KVLRTSPPSN…MNPVQKCEVW (733 aa)) are extracellular. A disordered region spans residues 50 to 79 (SNPQATALHGDSTTINQVPTGTASKGKSGD). The span at 60 to 74 (DSTTINQVPTGTASK) shows a compositional bias: polar residues. Residues 83–774 (VCLTQECIHT…MNPVQKCEVW (692 aa)) enclose the Peptidase M13 domain. 5 disulfides stabilise this stretch: Cys-84–Cys-89, Cys-107–Cys-759, Cys-115–Cys-719, Cys-171–Cys-424, and Cys-646–Cys-771. 7 N-linked (GlcNAc...) asparagine glycosylation sites follow: Asn-173, Asn-239, Asn-264, Asn-305, Asn-315, Asn-358, and Asn-554. Residue His-609 participates in Zn(2+) binding. Residue Glu-610 is part of the active site. His-613 is a Zn(2+) binding site. Asn-653 is a glycosylation site (N-linked (GlcNAc...) asparagine). A Zn(2+)-binding site is contributed by Glu-671. Residue Asp-675 is the Proton donor of the active site.

The protein belongs to the peptidase M13 family. Requires Zn(2+) as cofactor. Post-translationally, N-glycosylated. In terms of processing, the soluble form is probably produced by proteolytic cleavage. As to expression, detected in the stellate cells in the main segment and the bar-shaped cells in the initial segment of male and female Malpighian tubules (at protein level). Expressed in the spermatheca (at protein level). Expressed in the somatic cyst cells of the testes, with increased expression at the tail end of elongating cysts. Expressed in the ovaries with strong expression in the posterior polar cells and in border cells of stage 8, 9, and 10 follicles. In adults and third-instar larvae, expressed in the brain, ventral ganglion, and stellate cells. Also expressed in the foregut and the imaginal disks (eye, antennal and leg) of third-instar larvae. In stage 17 embryos, expressed in the tracheal system, foregut, hindgut and epidermis. Also expressed in the stellate cell progenitors of the caudal visceral mesoderm in embryos.

It localises to the cell membrane. The protein localises to the secreted. It catalyses the reaction Preferential cleavage of polypeptides between hydrophobic residues, particularly with Phe or Tyr at P1'.. Metalloendoprotease which cleaves peptides such as tachykinin peptide TK-2 at the amino side of hydrophobic residues. Functions in female fertility, embryogenesis and memory formation. Required in females for normal patterns of egg laying, probably due to its function in sperm retention and preventing sperm displacement by rival ejaculates. Also required for normal patterns of hatching due to its important role in early embryonic development. Required in the dorsal paired medial neurons for the proper formation of middle-term memory. Also required in the mushroom body neurons where it functions redundantly with neprilysins Nep3 and Nep4 in normal long-term memory formation. The polypeptide is Neprilysin-2 (Drosophila melanogaster (Fruit fly)).